Reading from the N-terminus, the 105-residue chain is N(2)-fixation sustaining protein CowN (105 aa).

This sequence belongs to the CowN family.

Functionally, is required to sustain N(2)-dependent growth in the presence of low levels of carbon monoxide (CO). Probably acts by protecting the N(2) fixation ability of the nitrogenase complex, which is inactivated in the presence of CO. The sequence is that of N(2)-fixation sustaining protein CowN from Tolumonas auensis (strain DSM 9187 / NBRC 110442 / TA 4).